The primary structure comprises 310 residues: Transcription factor RAX3 (310 aa).

HTH myb-type domains are found at residues 9–62 (KANV…LNYL) and 63–117 (RPNI…KKKL). DNA-binding regions (H-T-H motif) lie at residues 38–62 (WIAL…LNYL) and 90–113 (WSII…NTRL).

In terms of tissue distribution, ubiquitous.

The protein localises to the nucleus. Its function is as follows. Transcription activator. Positively regulates axillary meristems (AMs) formation and development, especially during inflorescence. This Arabidopsis thaliana (Mouse-ear cress) protein is Transcription factor RAX3 (RAX3).